The chain runs to 189 residues: Probable nicotinate-nucleotide adenylyltransferase (189 aa).

It belongs to the NadD family.

The enzyme catalyses nicotinate beta-D-ribonucleotide + ATP + H(+) = deamido-NAD(+) + diphosphate. It participates in cofactor biosynthesis; NAD(+) biosynthesis; deamido-NAD(+) from nicotinate D-ribonucleotide: step 1/1. Its function is as follows. Catalyzes the reversible adenylation of nicotinate mononucleotide (NaMN) to nicotinic acid adenine dinucleotide (NaAD). The protein is Probable nicotinate-nucleotide adenylyltransferase of Bacillus cereus (strain Q1).